A 237-amino-acid chain; its full sequence is Putative ATP-binding protein BMEII0108 (237 aa).

The ABC transporter domain occupies 5–205 (ISFNNVVMRY…DLPYPRTEAI (201 aa)). ATP is bound at residue 37 to 44 (GPSGCGKS).

Belongs to the ABC transporter superfamily. As to quaternary structure, the complex is composed of two ATP-binding proteins (BMEII0108), two transmembrane proteins (BMEII0107) and a solute-binding protein (BMEII0109).

Its subcellular location is the cell inner membrane. Its function is as follows. Probably part of an ABC transporter complex. Probably Responsible for energy coupling to the transport system. The protein is Putative ATP-binding protein BMEII0108 of Brucella melitensis biotype 1 (strain ATCC 23456 / CCUG 17765 / NCTC 10094 / 16M).